The primary structure comprises 219 residues: Interleukin-12 subunit alpha (219 aa).

An N-terminal signal peptide occupies residues M1–A22. 3 N-linked (GlcNAc...) asparagine glycosylation sites follow: N24, N93, and N107. 3 cysteine pairs are disulfide-bonded: C37–C110, C64–C196, and C85–C123.

The protein belongs to the IL-6 superfamily. As to quaternary structure, heterodimer with IL12B; disulfide-linked. This heterodimer is known as interleukin IL-12. Heterodimer with EBI3/IL27B; not disulfide-linked. This heterodimer is known as interleukin IL-35. Interacts with NBR1; this interaction promotes IL-12 secretion.

The protein localises to the secreted. In terms of biological role, heterodimerizes with IL12B to form the IL-12 cytokine or with EBI3/IL27B to form the IL-35 cytokine. IL-12 is primarily produced by professional antigen-presenting cells (APCs) such as B-cells and dendritic cells (DCs) as well as macrophages and granulocytes and regulates T-cell and natural killer-cell responses, induces the production of interferon-gamma (IFN-gamma), favors the differentiation of T-helper 1 (Th1) cells and is an important link between innate resistance and adaptive immunity. Mechanistically, exerts its biological effects through a receptor composed of IL12R1 and IL12R2 subunits. Binding to the receptor results in the rapid tyrosine phosphorylation of a number of cellular substrates including the JAK family kinases TYK2 and JAK2. In turn, recruited STAT4 gets phosphorylated and translocates to the nucleus where it regulates cytokine/growth factor responsive genes. As part of IL-35, plays essential roles in maintaining the immune homeostasis of the liver microenvironment and also functions as an immune-suppressive cytokine. Mediates biological events through unconventional receptors composed of IL12RB2 and gp130/IL6ST heterodimers or homodimers. Signaling requires the transcription factors STAT1 and STAT4, which form a unique heterodimer that binds to distinct DNA sites. This chain is Interleukin-12 subunit alpha (IL12A), found in Cercocebus atys (Sooty mangabey).